A 471-amino-acid polypeptide reads, in one-letter code: Variant surface glycoprotein WRATAT A (471 aa).

An N-terminal signal peptide occupies residues 1-18 (MSVLFLLLAITRTASVKA). 2 N-linked (GlcNAc...) asparagine glycosylation sites follow: asparagine 61 and asparagine 133. Residues 373–457 (QEQTLATTGT…ANTTGSSNSF (85 aa)) are disordered. Positions 379 to 392 (TTGTKSSSPQSTQQ) are enriched in low complexity. Disulfide bonds link cysteine 401–cysteine 414 and cysteine 410–cysteine 427. A compositionally biased stretch (basic and acidic residues) spans 401-447 (CNDKAKETECNSPCKWDKEEKDEKKRCKLSEEGKQAEKENQEGKDGK). Positions 448–457 (ANTTGSSNSF) are enriched in polar residues. Asparagine 449 carries an N-linked (GlcNAc...) asparagine glycan. The GPI-anchor amidated serine moiety is linked to residue serine 454. The propeptide at 455 to 471 (NSFVIKTSPLLLAVLLL) is removed in mature form.

It localises to the cell membrane. Its function is as follows. VSG forms a coat on the surface of the parasite. The trypanosome evades the immune response of the host by expressing a series of antigenically distinct VSGs from an estimated 1000 VSG genes. In Trypanosoma brucei rhodesiense, this protein is Variant surface glycoprotein WRATAT A.